The sequence spans 299 residues: ATP phosphoribosyltransferase (299 aa).

This sequence belongs to the ATP phosphoribosyltransferase family. Long subfamily. Requires Mg(2+) as cofactor.

It is found in the cytoplasm. The catalysed reaction is 1-(5-phospho-beta-D-ribosyl)-ATP + diphosphate = 5-phospho-alpha-D-ribose 1-diphosphate + ATP. Its pathway is amino-acid biosynthesis; L-histidine biosynthesis; L-histidine from 5-phospho-alpha-D-ribose 1-diphosphate: step 1/9. Its activity is regulated as follows. Feedback inhibited by histidine. Functionally, catalyzes the condensation of ATP and 5-phosphoribose 1-diphosphate to form N'-(5'-phosphoribosyl)-ATP (PR-ATP). Has a crucial role in the pathway because the rate of histidine biosynthesis seems to be controlled primarily by regulation of HisG enzymatic activity. This Baumannia cicadellinicola subsp. Homalodisca coagulata protein is ATP phosphoribosyltransferase.